A 360-amino-acid chain; its full sequence is C-X-C chemokine receptor type 2 (360 aa).

At 1–48 the chain is on the extracellular side; that stretch reads MEDFNMESDSFEDFWKGEDLSNYSYSSTLPPFLLDAAPCEPESLEINK. N22 carries N-linked (GlcNAc...) asparagine glycosylation. Residues 49–75 traverse the membrane as a helical segment; that stretch reads YFVVIIYALVFLLSLLGNSLVMLVILY. Residues 76 to 84 are Cytoplasmic-facing; the sequence is SRVGRSVTD. Residues 85–105 traverse the membrane as a helical segment; that stretch reads VYLLNLALADLLFALTLPIWA. At 106-120 the chain is on the extracellular side; it reads ASKVNGWIFGTFLCK. A disulfide bridge links C119 with C196. A helical membrane pass occupies residues 121 to 142; that stretch reads VVSLLKEVNFYSGILLLACISV. Topologically, residues 143–163 are cytoplasmic; that stretch reads DRYLAIVHATRTLTQKRYLVK. A helical membrane pass occupies residues 164 to 183; it reads FICLSIWGLSLLLALPVLLF. The Extracellular segment spans residues 184–208; sequence RRTVYSSNVSPACYEDMGNNTANWR. Residues 209 to 231 form a helical membrane-spanning segment; sequence MLLRILPQSFGFIVPLLIMLFCY. Residues 232–251 are Cytoplasmic-facing; the sequence is GFTLRTLFKAHMGQKHRAMR. Residues 252-273 form a helical membrane-spanning segment; that stretch reads VIFAVVLIFLLCWLPYNLVLLA. The Extracellular segment spans residues 274 to 294; sequence DTLMRTQVIQETCERRNHIDR. A helical membrane pass occupies residues 295 to 315; the sequence is ALDATEILGILHSCLNPLIYA. Topologically, residues 316-360 are cytoplasmic; the sequence is FIGQKFRHGLLKILAIHGLISKDSLPKDSRPSFVGSSSGHTSTTL. Phosphoserine is present on residues S347, S351, S352, and S353.

The protein belongs to the G-protein coupled receptor 1 family. As to quaternary structure, interacts with IL8. Interacts with GNAI2. Phosphorylated upon ligand binding; which is required for desensitization. Post-translationally, (Microbial infection) Proteolytically cleaved by Staphylococcus aureus staphopain A/SspP. This cleavage inhibits CXCR2-dependent neutrophil activation and chemotaxis.

The protein resides in the cell membrane. Receptor for interleukin-8 which is a powerful neutrophil chemotactic factor. Binding of IL-8 to the receptor causes activation of neutrophils. This response is mediated via a G-protein that activates a phosphatidylinositol-calcium second messenger system. Binds to IL-8 with high affinity. Also binds with high affinity to CXCL3, GRO/MGSA and NAP-2. The chain is C-X-C chemokine receptor type 2 (CXCR2) from Homo sapiens (Human).